Consider the following 245-residue polypeptide: MRPLSELDPEELIRYISESPKRTIAKFYVKTDDPEGLAERLEERLEDAKVFTGVDHVIVIGEHDDVVEVLESEDSVEYYHKELDHRNRAVPLADYSEFEDVRIEPGAIIREKVKLGKGVVVMMGAVINIGAKIGDGTMVDMNAVVGSRAEVGKNVHIGAGAVIAGVLEPPSAKPVVIEDDVVIGANAVILEGVRVGKGAVVAAGAVVTEDVPPSKVVAGVPARVVKDVDKKTEAKTQIVDALRCL.

The protein belongs to the transferase hexapeptide repeat family. DapH subfamily.

It catalyses the reaction (S)-2,3,4,5-tetrahydrodipicolinate + acetyl-CoA + H2O = L-2-acetamido-6-oxoheptanedioate + CoA. It participates in amino-acid biosynthesis; L-lysine biosynthesis via DAP pathway; LL-2,6-diaminopimelate from (S)-tetrahydrodipicolinate (acetylase route): step 1/3. In terms of biological role, catalyzes the transfer of an acetyl group from acetyl-CoA to tetrahydrodipicolinate. The sequence is that of 2,3,4,5-tetrahydropyridine-2,6-dicarboxylate N-acetyltransferase from Methanopyrus kandleri (strain AV19 / DSM 6324 / JCM 9639 / NBRC 100938).